The primary structure comprises 124 residues: Large ribosomal subunit protein bL12 (124 aa).

It belongs to the bacterial ribosomal protein bL12 family. Homodimer. Part of the ribosomal stalk of the 50S ribosomal subunit. Forms a multimeric L10(L12)X complex, where L10 forms an elongated spine to which 2 to 4 L12 dimers bind in a sequential fashion. Binds GTP-bound translation factors.

Functionally, forms part of the ribosomal stalk which helps the ribosome interact with GTP-bound translation factors. Is thus essential for accurate translation. The polypeptide is Large ribosomal subunit protein bL12 (Nitrosomonas europaea (strain ATCC 19718 / CIP 103999 / KCTC 2705 / NBRC 14298)).